Consider the following 609-residue polypeptide: DNA-directed RNA polymerase subunit beta' (609 aa).

4 residues coordinate Zn(2+): Cys67, Cys69, Cys82, and Cys85. 3 residues coordinate Mg(2+): Asp460, Asp462, and Asp464.

The protein belongs to the RNA polymerase beta' chain family. RpoC1 subfamily. In terms of assembly, in plastids the minimal PEP RNA polymerase catalytic core is composed of four subunits: alpha, beta, beta', and beta''. When a (nuclear-encoded) sigma factor is associated with the core the holoenzyme is formed, which can initiate transcription. Mg(2+) is required as a cofactor. Zn(2+) serves as cofactor.

It is found in the plastid. The protein localises to the chloroplast. The enzyme catalyses RNA(n) + a ribonucleoside 5'-triphosphate = RNA(n+1) + diphosphate. Its function is as follows. DNA-dependent RNA polymerase catalyzes the transcription of DNA into RNA using the four ribonucleoside triphosphates as substrates. The sequence is that of DNA-directed RNA polymerase subunit beta' from Emiliania huxleyi (Coccolithophore).